The sequence spans 624 residues: RQC trigger complex subunit CUE3 (624 aa).

The region spanning 316–359 (VNEEQLSALMELFPQFSKYQLSQTLLAYDNNIELVTNKIFEDPT) is the CUE domain. 3 disordered regions span residues 366–390 (REPA…ELSI), 435–469 (RDDT…DDSN), and 546–624 (SKTG…NNAI). S377 bears the Phosphoserine mark. 2 stretches are compositionally biased toward basic and acidic residues: residues 443–455 (DVNR…RIGL) and 568–589 (EQAK…TEQK). Positions 590–617 (KRQHAKNEKRKGARANHNRKKGHDKKLA) are enriched in basic residues.

As to quaternary structure, component of the RQT (ribosome quality control trigger) complex, composed of SLH1, CUE3, and RQT4. Interacts with ubiquitin; the interaction is direct. Interacts with SLH1. Interacts with RQT4. Interacts with HEL2. Associates with translating ribosomes.

Its subcellular location is the cytoplasm. Its function is as follows. Involved in activation of the ribosome quality control (RQC) pathway, a pathway that degrades nascent peptide chains during problematic translation. Specifically recognizes and binds RPS20/uS10 ubiquitinated by HEL2, promoting recruitment of the RQT (ribosome quality control trigger) complex on stalled ribosomes, followed by disassembly of stalled ribosomes. The polypeptide is RQC trigger complex subunit CUE3 (CUE3) (Saccharomyces cerevisiae (strain ATCC 204508 / S288c) (Baker's yeast)).